Reading from the N-terminus, the 205-residue chain is Dephospho-CoA kinase (205 aa).

A DPCK domain is found at 7 to 205 (IIGITGRIAS…QEIINYERFE (199 aa)). Residue 15–20 (ASGKDA) participates in ATP binding.

This sequence belongs to the CoaE family.

The protein localises to the cytoplasm. The enzyme catalyses 3'-dephospho-CoA + ATP = ADP + CoA + H(+). It participates in cofactor biosynthesis; coenzyme A biosynthesis; CoA from (R)-pantothenate: step 5/5. Catalyzes the phosphorylation of the 3'-hydroxyl group of dephosphocoenzyme A to form coenzyme A. The polypeptide is Dephospho-CoA kinase (Borrelia garinii subsp. bavariensis (strain ATCC BAA-2496 / DSM 23469 / PBi) (Borreliella bavariensis)).